The sequence spans 374 residues: Speckle-type POZ protein B (374 aa).

An MATH domain is found at 31–161; the sequence is KFSYMWTINN…DDKLTLFCEV (131 aa). The segment at 71–191 is required for nuclear localization; it reads VNPKGLDEES…PECRLSDELG (121 aa). The 125-residue stretch at 173 to 297 folds into the BTB domain; it reads QNTMNMVKVP…MCEEALCSNL (125 aa). A homodimerization region spans residues 297-355; it reads LSVENAAEILILADLHSADQLKTQAVDFINYHASDVMETSGWKSMVVSHPHLVAEAYRS.

It belongs to the Tdpoz family. As to quaternary structure, homodimer. Part of cullin-RING-based BCR (BTB-CUL3-RBX1) E3 ubiquitin-protein ligase complexes that contain CUL3 and SPOP, plus a target protein.

It localises to the nucleus. The protein resides in the nucleus speckle. Its pathway is protein modification; protein ubiquitination. Component of a cullin-RING-based BCR (BTB-CUL3-RBX1) E3 ubiquitin-protein ligase complex that mediates the ubiquitination of target proteins, leading most often to their proteasomal degradation. This Xenopus laevis (African clawed frog) protein is Speckle-type POZ protein B (spop-b).